A 1709-amino-acid chain; its full sequence is Acrosomal protein KIAA1210 (1709 aa).

Disordered regions lie at residues 207-226 (PVRE…GSKA), 239-275 (PERS…SKVP), 451-663 (PNLD…AEKT), 763-973 (PPRS…MAVE), 1211-1382 (LKRG…SVNA), 1408-1516 (TKKF…GRGH), 1539-1571 (ADKQ…QSDY), and 1589-1653 (FKAH…KSVG). The segment covering 257 to 272 (PQQRSHISRTLPKPRS) has biased composition (basic residues). The segment covering 473-490 (EEEKSITKPKEINEKKLG) has biased composition (basic and acidic residues). 2 stretches are compositionally biased toward polar residues: residues 494-505 (ADSSSQKQNNKT) and 514-527 (DQAP…SQGY). Positions 595–608 (EQPTTSQPETTTPQ) are enriched in low complexity. Residues 651-663 (PYHEDAASGAEKT) are compositionally biased toward basic and acidic residues. Positions 777-794 (EEVSSDSENIPEEGDGSE) are enriched in acidic residues. 5 stretches are compositionally biased toward polar residues: residues 886–941 (KNQQ…QSDS), 1288–1299 (FKEQLSPRQLSQ), 1332–1350 (HSSQ…SSKG), 1366–1376 (PSSSPFQQQVH), and 1457–1469 (DGNN…LSNQ). Over residues 1502 to 1513 (SVPSGPISSSVG) the composition is skewed to low complexity. Residues 1542-1552 (QQSRPKSESMA) show a composition bias toward basic and acidic residues.

In terms of assembly, interacts with TOP2B.

The protein resides in the cytoplasmic vesicle. The protein localises to the secretory vesicle. It localises to the acrosome. The polypeptide is Acrosomal protein KIAA1210 (Homo sapiens (Human)).